A 517-amino-acid chain; its full sequence is Crotonobetaine/carnitine--CoA ligase (517 aa).

It belongs to the ATP-dependent AMP-binding enzyme family.

The enzyme catalyses 4-(trimethylamino)butanoate + ATP + CoA = 4-(trimethylamino)butanoyl-CoA + AMP + diphosphate. It catalyses the reaction crotonobetaine + ATP + CoA = crotonobetainyl-CoA + AMP + diphosphate. The catalysed reaction is (R)-carnitine + ATP + CoA = (R)-carnitinyl-CoA + AMP + diphosphate. It participates in amine and polyamine metabolism; carnitine metabolism. Its function is as follows. Catalyzes the transfer of CoA to carnitine, generating the initial carnitinyl-CoA needed for the CaiB reaction cycle. Also has activity toward crotonobetaine and gamma-butyrobetaine. The sequence is that of Crotonobetaine/carnitine--CoA ligase from Escherichia coli O45:K1 (strain S88 / ExPEC).